A 415-amino-acid chain; its full sequence is Probable carboxypeptidase ACLA_013260 (415 aa).

Residues 1-17 (MKFPWLLLVKGAASVAA) form the signal peptide. A glycan (N-linked (GlcNAc...) asparagine) is linked at asparagine 97. Aspartate 145 contributes to the Zn(2+) binding site. The Proton acceptor role is filled by glutamate 177. A Zn(2+)-binding site is contributed by glutamate 178. Residue asparagine 271 is glycosylated (N-linked (GlcNAc...) asparagine).

This sequence belongs to the peptidase M20A family. Zn(2+) serves as cofactor.

Its subcellular location is the secreted. The sequence is that of Probable carboxypeptidase ACLA_013260 from Aspergillus clavatus (strain ATCC 1007 / CBS 513.65 / DSM 816 / NCTC 3887 / NRRL 1 / QM 1276 / 107).